Consider the following 118-residue polypeptide: Large ribosomal subunit protein uL24 (118 aa).

Belongs to the universal ribosomal protein uL24 family. In terms of assembly, part of the 50S ribosomal subunit.

One of two assembly initiator proteins, it binds directly to the 5'-end of the 23S rRNA, where it nucleates assembly of the 50S subunit. Its function is as follows. One of the proteins that surrounds the polypeptide exit tunnel on the outside of the subunit. The protein is Large ribosomal subunit protein uL24 of Prochlorococcus marinus (strain MIT 9303).